The sequence spans 336 residues: Phosphate acyltransferase (336 aa).

It belongs to the PlsX family. In terms of assembly, homodimer. Probably interacts with PlsY.

The protein resides in the cytoplasm. It carries out the reaction a fatty acyl-[ACP] + phosphate = an acyl phosphate + holo-[ACP]. It participates in lipid metabolism; phospholipid metabolism. Catalyzes the reversible formation of acyl-phosphate (acyl-PO(4)) from acyl-[acyl-carrier-protein] (acyl-ACP). This enzyme utilizes acyl-ACP as fatty acyl donor, but not acyl-CoA. The sequence is that of Phosphate acyltransferase from Pseudomonas paraeruginosa (strain DSM 24068 / PA7) (Pseudomonas aeruginosa (strain PA7)).